Here is a 1086-residue protein sequence, read N- to C-terminus: Tudor domain-containing protein 7 (1086 aa).

HTH OST-type domains are found at residues 3 to 76 and 222 to 291; these read EADL…YAVA and KMDE…YPAR. Positions 295–306 are enriched in basic and acidic residues; the sequence is PLKSDQDPEKEL. A disordered region spans residues 295–324; it reads PLKSDQDPEKELPPPPPAPKQEVPSQGSPA. The region spanning 325–394 is the HTH OST-type 3 domain; that stretch reads VMPDVKEKVA…TQKAILYAKL (70 aa). 2 Tudor domains span residues 501–558 and 691–748; these read TVHV…FCSL and LPFC…FLQE. The segment at 844 to 866 is disordered; it reads AASSPGNRNGGTPAPGSPAESLR. Serine 847 carries the post-translational modification Phosphoserine. Residues 849–1086 are interaction with CDK17; the sequence is GNRNGGTPAP…QYLLELSKVN (238 aa). An interaction with CABLES1 region spans residues 881 to 1086; it reads TSSFSLEELP…QYLLELSKVN (206 aa).

It belongs to the TDRD7 family. In terms of assembly, found in a mRNP complex, at least composed of TDRD1, TDRD6, TDRD7 and DDX4. Found in a complex containing CABLES1, CDK16 and CDK17. Interacts with CABLES1, CDK17 and PIWIL1. Mainly expressed in testis. Expressed in spermatogonia, spermatocytes and round spermatids (at protein level). Also expressed in the developing lens.

The protein localises to the cytoplasm. Functionally, component of specific cytoplasmic RNA granules involved in post-transcriptional regulation of specific genes: probably acts by binding to specific mRNAs and regulating their translation. Required for lens transparency during lens development, by regulating translation of genes such as CRYBB3 and HSPB1 in the developing lens. Also required during spermatogenesis. The polypeptide is Tudor domain-containing protein 7 (Tdrd7) (Mus musculus (Mouse)).